The following is an 80-amino-acid chain: Lantibiotic Flvalpha.c (80 aa).

A propeptide spans 1–38 (cleaved by FlvT); it reads MNKNPIYRSEEEAKNIACGNVAAELDENSQALDAINGA. 2,3-didehydrobutyrine; by FlvM1 occurs at positions 43 and 47. A cross-link (beta-methyllanthionine (Thr-Cys); by FlvM1) is located at residues 52 to 55; it reads TLGC. Residues 58–68 constitute a cross-link (lanthionine (Ser-Cys); by FlvM1); that stretch reads SYGLGNGGYCC. 2 consecutive cross-links (beta-methyllanthionine (Thr-Cys); by FlvM1) follow at residues 69-74 and 71-78; these read TYTVEC and TVECSKTC.

The lanthionine formed by Ser-58 and Cys-68 forms a putative lipid II binding motif. In terms of processing, maturation of FlvA1 peptides involves the enzymatic conversion of Thr, and Ser into dehydrated AA and the formation of thioether bonds with cysteines. Modifications are processed by the flavecin synthetase FlvM1. This is followed by membrane translocation and cleavage of the modified precursor. Post-translationally, contains DL-lanthionine and DL-beta-methyllanthionine, when coepressed in E.coli with the flavecin synthetase FlvM1.

Its subcellular location is the secreted. Its function is as follows. Lanthionine-containing peptide antibiotic (lantibiotic) only active on Gram-positive bacteria in synergy with Flvbeta peptides, which are encoded by the same operon than Flvalpha.a. Shows antibacterial activity in synergy with Flvbeta.b, Flvbeta.c, Flvbeta.e and Flvbeta.g. Does not show antibacterial activity when tested with Flvbeta.a, Flvbeta.d, Flvbeta.f and Flvbeta.h. The bactericidal activity of lantibiotics is based on depolarization of energized bacterial cytoplasmic membranes, initiated by the formation of aqueous transmembrane pores. The sequence is that of Lantibiotic Flvalpha.c from Ruminococcus flavefaciens.